The following is a 364-amino-acid chain: Transcription factor SPEECHLESS (364 aa).

The interval 35–109 (GEISPTAAST…QKMSHVTVER (75 aa)) is disordered. Serine 38 carries the phosphoserine; by ASK7 modification. Residue threonine 40 is modified to Phosphothreonine; by ASK7. A compositionally biased stretch (polar residues) spans 40-53 (TAASTPKDGTTSSK). Serine 43 bears the Phosphoserine; by ASK7 mark. A Phosphothreonine; by ASK7 modification is found at threonine 44. Residue serine 65 is modified to Phosphoserine; by ASK7. The segment covering 79-92 (EDEEEEDGDGEAEE) has biased composition (acidic residues). The tract at residues 99-112 (QQKMSHVTVERNRR) is basic motif. A bHLH domain is found at 99–150 (QQKMSHVTVERNRRKQMNEHLTVLRSLMPCFYVKRGDQASIIGGVVEYISEL). Positions 113-150 (KQMNEHLTVLRSLMPCFYVKRGDQASIIGGVVEYISEL) are helix-loop-helix motif. The residue at position 171 (serine 171) is a Phosphoserine; by ASK7. Residues 171–227 (SPRVVPSPRPSPPVLSPRKPPLSPRINHHQIHHHLLLPPISPRTPQPTSPYRAIPPQ) are disordered. A compositionally biased stretch (pro residues) spans 175–193 (VPSPRPSPPVLSPRKPPLS). Serine 177 bears the Phosphoserine; by ASK7, MPK3 and MPK6 mark. Serine 181 is subject to Phosphoserine; by ASK7. Serine 186 is subject to Phosphoserine; by CDKA-1, ASK7, MPK3 and MPK6. Serine 193 is modified (phosphoserine; by MPK3 and MPK6). A compositionally biased stretch (basic residues) spans 196–205 (INHHQIHHHL). A compositionally biased stretch (pro residues) spans 209-218 (PISPRTPQPT). At serine 211 the chain carries Phosphoserine; by MPK3 and MPK6. Threonine 214 is subject to Phosphothreonine; by ASK7, MPK3 and MPK6. Residue serine 219 is modified to Phosphoserine; by ASK7, MPK3 and MPK6.

In terms of assembly, homodimer. Forms dimers with SCRM and SCRM2. May interact with CDKA-1. Phosphorylated by ASK7/BIN2 and ASK3/SK12; this post-translational modification inhibits activity and limit epidermal cell proliferation. Phosphorylation by MPK3 and MPK6 leads to the inhibition of stomatal fate and to degradation. Stabilized by CDKA-1-mediated phosphorylation at Ser-186 which promotes stomatal development. As to expression, expressed in developing leaf epidermis. Reduced accumulation in the stomatal lineage ground cells (SLGCs) where BASL is polarized in the cell cortex. Observed in small cells of non-protruding hypocotyl cell files and of developing cotyledon epidermis. Restricted to meristemoids (stomatal precursor cell) in leaves epidermis, mostly in dividing cells of non-protruding cell files.

It localises to the nucleus. Negatively regulated through phosphorylation by the MAPK module. Activity is constrained by polarized BASL in stomatal lineage ground cells (SLGCs) undergoing ACD. In terms of biological role, transcription factor acting as an integration node for stomata and brassinosteroid (BR) signaling pathways to control stomatal initiation and development. Activates transcription when in the presence of SCRM/ICE1. Functions as a dimer with SCRM or SCRM2 during stomatal initiation. Required for the initiation, the spacing and the formation of stomata, by promoting the first asymmetric cell divisions. Together with FMA and MUTE, modulates the stomata formation. Involved in the regulation of growth reduction under osmotic stress (e.g. mannitol), associated with a quick decrease of meristemoid mother cells (MMCs) number lower stomatal index and density. This is Transcription factor SPEECHLESS from Arabidopsis thaliana (Mouse-ear cress).